Reading from the N-terminus, the 396-residue chain is Probable sugar efflux transporter (396 aa).

Residues 1–14 (MTTNTVSRKVAWLR) lie on the Cytoplasmic side of the membrane. The helical transmembrane segment at 15–35 (VVTLAVAAFIFNTTEFVPVGL) threads the bilayer. The Periplasmic segment spans residues 36-49 (LSDIAQSFHMQTAQ). Residues 50 to 70 (VGIMLTIYAWVVALMSLPFML) form a helical membrane-spanning segment. Residues 71 to 80 (MTSQVERRKL) lie on the Cytoplasmic side of the membrane. A helical membrane pass occupies residues 81-101 (LICLFVVFIASHVLSFLSWSF). Threonine 102 is a topological domain (periplasmic). Residues 103-123 (VLVISRIGVAFAHAIFWSITA) traverse the membrane as a helical segment. The Cytoplasmic portion of the chain corresponds to 124–135 (SLAIRMAPAGKR). A helical membrane pass occupies residues 136–156 (AQALSLIATGTALAMVLGLPL). Topologically, residues 157–169 (GRIVGQYFGWRMT) are periplasmic. The chain crosses the membrane as a helical span at residues 170–190 (FFAIGIGALVTLLCLIKLLPL). Residues 191-208 (LPSEHSGSLKSLPLLFRR) are Cytoplasmic-facing. A helical transmembrane segment spans residues 209–229 (PALMSIYLLTVVVVTAHYTAY). Residues 230–245 (SYIEPFVQNIAGFSAN) are Periplasmic-facing. A helical transmembrane segment spans residues 246–266 (FATALLLLLGGAGIIGSVIFG). At 267-274 (KLGNQYAS) the chain is on the cytoplasmic side. A helical transmembrane segment spans residues 275–295 (ALVSTAIALLLVCLALLLPAA). Over 296–298 (NSE) the chain is Periplasmic. Residues 299 to 319 (IHLGVLSIFWGIAMMIIGLGM) form a helical membrane-spanning segment. Topologically, residues 320-332 (QVKVLALAPDATD) are cytoplasmic. The helical transmembrane segment at 333–353 (VAMALFSGIFNIGIGAGALVG) threads the bilayer. Residues 354-363 (NQVSLHWSMS) are Periplasmic-facing. Residues 364–384 (MIGYVGAVPAFAALIWSIIIF) traverse the membrane as a helical segment. The Cytoplasmic segment spans residues 385–396 (RRWPVTLEEQTQ).

Belongs to the major facilitator superfamily. SotB (TC 2.A.1.2) family.

The protein localises to the cell inner membrane. Its function is as follows. Involved in the efflux of sugars. The physiological role may be the reduction of the intracellular concentration of toxic sugars or sugar metabolites. In Shigella flexneri, this protein is Probable sugar efflux transporter.